The primary structure comprises 470 residues: Sugar transporter ESL1 (470 aa).

An Essential for the localization to the vacuole membrane motif is present at residues 10-16 (LEAGLLL). 12 helical membrane-spanning segments follow: residues 28–48 (ITAV…CFGC), 68–88 (VAQY…GAIF), 99–119 (KGTM…VALA), 130–150 (LSTG…IAEI), 157–177 (GAFV…FYVI), 186–206 (LALI…FIPE), 268–288 (VVIG…GLMY), 303–323 (IGSM…LILV), 332–352 (LLAS…SFCF), 368–388 (IGVV…PWII), 404–424 (LVTL…NFML), and 430–450 (GTFL…YAMV).

The protein belongs to the major facilitator superfamily. Sugar transporter (TC 2.A.1.1) family. In terms of tissue distribution, expressed in both shoots and roots. In roots, strongly expressed in pericycle and xylem parenchyma cells, and to a lesser extent in the root endodermis. In flowers, expressed in sepals.

The protein localises to the vacuole membrane. It is found in the vesicle. In terms of biological role, sugar transporter. Transports monosaccharides across the vacuolar membrane independently from a proton gradient. May function coordinately with the vacuolar invertase to regulate osmotic pressure by affecting the accumulation of sugar in the cells under abiotic stress conditions. The chain is Sugar transporter ESL1 from Arabidopsis thaliana (Mouse-ear cress).